Consider the following 372-residue polypeptide: MSLPFLRTLQGDRFFQLLILVGIGLSFFVPFAPKSWPAAIDWHTIITLSGLMLLTKGVELSGYFDVLGRKMVRRFATERRLAMFMVLAAALLSTFLTNDVALFIVVPLTITLKRLCEIPVNRLIIFEALAVNAGSLLTPIGNPQNILIWGRSGLSFAGFIAQMAPLAGAMMLTLLLLCWCCFPGKAMQYHTGVQTPEWKPRLVWSCLGLYIVFLTALEFKQELWGLVIVAAGFALLARRVVLSVDWTLLLVFMAMFIDVHLLTQLPALQGVLGNVSHLSEPGLWLTAIGLSQVISNVPSTILLLNYVPPSLLLVWAVNVGGFGLLPGSLANLIALRMANDRRIWWRFHLYSIPMLLWAALVGYVLLVILPAN.

The Periplasmic portion of the chain corresponds to 1–13 (MSLPFLRTLQGDR). The next 2 membrane-spanning stretches (helical) occupy residues 14–34 (FFQLLILVGIGLSFFVPFAPK) and 35–55 (SWPAAIDWHTIITLSGLMLLT). Residues 56-85 (KGVELSGYFDVLGRKMVRRFATERRLAMFM) are Periplasmic-facing. The helical transmembrane segment at 86–106 (VLAAALLSTFLTNDVALFIVV) threads the bilayer. Over 107-122 (PLTITLKRLCEIPVNR) the chain is Cytoplasmic. The helical transmembrane segment at 123-143 (LIIFEALAVNAGSLLTPIGNP) threads the bilayer. The Periplasmic portion of the chain corresponds to 144–155 (QNILIWGRSGLS). A helical membrane pass occupies residues 156–176 (FAGFIAQMAPLAGAMMLTLLL). Residues 177–208 (LCWCCFPGKAMQYHTGVQTPEWKPRLVWSCLG) lie on the Cytoplasmic side of the membrane. A helical membrane pass occupies residues 209-229 (LYIVFLTALEFKQELWGLVIV). Topologically, residues 230–247 (AAGFALLARRVVLSVDWT) are periplasmic. Residues 248 to 268 (LLLVFMAMFIDVHLLTQLPAL) traverse the membrane as a helical segment. The Cytoplasmic segment spans residues 269-283 (QGVLGNVSHLSEPGL). The helical transmembrane segment at 284 to 304 (WLTAIGLSQVISNVPSTILLL) threads the bilayer. Residues 305 to 309 (NYVPP) lie on the Periplasmic side of the membrane. Residues 310–330 (SLLLVWAVNVGGFGLLPGSLA) form a helical membrane-spanning segment. The Cytoplasmic portion of the chain corresponds to 331-348 (NLIALRMANDRRIWWRFH). The helical transmembrane segment at 349–369 (LYSIPMLLWAALVGYVLLVIL) threads the bilayer. Topologically, residues 370–372 (PAN) are periplasmic.

It belongs to the CitM (TC 2.A.11) transporter family.

The protein resides in the cell inner membrane. The chain is Inner membrane protein YbiR (ybiR) from Escherichia coli (strain K12).